Reading from the N-terminus, the 380-residue chain is 3-isopropylmalate dehydrogenase (380 aa).

NAD(+) is bound at residue 79–90 (GPEWAGVHPTPE). Residues Arg97, Arg107, Arg136, and Asp229 each contribute to the substrate site. Residues Asp229, Asp254, and Asp258 each contribute to the Mg(2+) site. An NAD(+)-binding site is contributed by 294–306 (GSAPDISGKGLAN).

Belongs to the isocitrate and isopropylmalate dehydrogenases family. Homodimer. Requires Mg(2+) as cofactor. Mn(2+) serves as cofactor.

The protein localises to the cytoplasm. The enzyme catalyses (2R,3S)-3-isopropylmalate + NAD(+) = 4-methyl-2-oxopentanoate + CO2 + NADH. Its pathway is amino-acid biosynthesis; L-leucine biosynthesis; L-leucine from 3-methyl-2-oxobutanoate: step 3/4. Functionally, catalyzes the oxidation of 3-carboxy-2-hydroxy-4-methylpentanoate (3-isopropylmalate) to 3-carboxy-4-methyl-2-oxopentanoate. The product decarboxylates to 4-methyl-2 oxopentanoate. This Hapsidospora chrysogena (Acremonium chrysogenum) protein is 3-isopropylmalate dehydrogenase (LEU2).